The primary structure comprises 864 residues: Leucine--tRNA ligase (864 aa).

Residues Pro-42–His-52 carry the 'HIGH' region motif. The 'KMSKS' region signature appears at Lys-619–Ser-623. Lys-622 is an ATP binding site.

This sequence belongs to the class-I aminoacyl-tRNA synthetase family.

It is found in the cytoplasm. The enzyme catalyses tRNA(Leu) + L-leucine + ATP = L-leucyl-tRNA(Leu) + AMP + diphosphate. This is Leucine--tRNA ligase from Wigglesworthia glossinidia brevipalpis.